Consider the following 130-residue polypeptide: Profilin-1 (130 aa).

It belongs to the profilin family. As to quaternary structure, interacts with actin. Interacts with RHO1 (GTP-bound form).

The protein localises to the cytoplasm. It localises to the cytoskeleton. Its subcellular location is the cell projection. The protein resides in the phagocytic cup. It is found in the cytoplasmic vesicle. The protein localises to the phagosome. Its function is as follows. Binds to actin and affects the structure of the cytoskeleton. At high concentrations, profilin prevents the polymerization of actin, whereas it enhances it at low concentrations. By binding to PIP2, it inhibits the formation of IP3 and DG. The chain is Profilin-1 from Entamoeba histolytica (strain ATCC 30459 / HM-1:IMSS / ABRM).